The sequence spans 1298 residues: MAAVYGIQLVNKLNTATVRRTYLPNRYDILIDRLTNHTQHNVLHRALDFNATTREATVVQLYPPLNAWTPSSATNVTDYTYLEWVDFIQERSTTFSEVLRQRYPITTYANRFVNPLVVGAAFSDFLNADDISVYLEHLFYDPRVESPVQAILSFPYQWTPRFHVFQEFIRTGAGCKYARSSRDMTPPTPARLPRYGKHRPAYATVFYYNTLAARSTILAGISAGPTALEHFDSPTYGPHIILPQAGDVLGYHSRPVSQADLLMTESVMDCLRENSQASASTAVARLDQTYHPVANFDPTNEDSMMSRLTNLALLVVQGAQAELAIPTVPTNDDVRGFVARLMSEGQRQRWFPYRTDRVLIHPDSPFVLPPGDFYAAYRVANFPFTSGTYTSVPNATKPLRVLPQYRAATILPAQATQAYEDHVIAPININHGYCISGGVYFTADDISIDPTPFPARDLAQLPQNYFDPNRMARRELLRRLRVPSDRSYLKDNAVFTFLASLVNPATALPALQPGFSLAYLGASAAHAKSDEPTILADLRNGSIPGLPIPSRIAQFGYDVVHGSLLDLTRAVPTGTFGLVYADLDQVEDAGTDLPAANRAALAMLGTTLQMCTAGGVAVLKVNFPTVEFWTQLFNQYATFATTLHVVKPIVVNSSEVFVVMSGRQSAGNLTCTTSLQRALLAMYARNAAIDQTMTHVPMLGQADDGTSALGMEAIRLFDPLFVEGNPNAATSALATLMANVVPSSIHMSRLPVNGPVSTTIFGKRTFLSTRRRDRLLEYPLPMVTAINHQRRFTAPPSFSIYPTEPVNVTTLVAAGYNAYVHTVITSAQPAHLFDLGTGPECRILSLVPQNTRVTMVDSRPCAELMQAYDPNTTAYEQADYTLAAFWNGRQCDAVSAIFTLGAAAASNAVTIDALLANLLPSIANAGTTRLWLQVNAPLAGPTPIPGLIDIDTRAGTYTFNNGERTEPYIDPQVMQATVLAHFPNATLSWYTLPPTCEWLDYIIGAGSSLDLSTIPTALQYSQLTPILSIDTNVAPLRVNPIPTPLGQQCAIRIPTNDPAAVLDAKHRGVPVITGTPAALTSLMGNAALQYIQANNEFLLQLTPTLAGIFDVTLTSAGQPPIPRGSFTITAPPPTAAVTMPANIDYTDAGNDGPIACDPYYNLAVCIMRNGQYVRVNPEKARVETVAAGRALHFVLDLADNHVLMYLCDVTPAAIGAIIAHPLADIYQLVFPNNTPLRASLPYIGGGARVELNNQPYLSLTNPPPVLPAGTALAALATAASVGQPTYTLPAGAYRYVLE.

This sequence belongs to the aquareoviridae outer capsid VP1 protein family.

It localises to the virion. The enzyme catalyses a 5'-end diphospho-ribonucleoside in mRNA + GTP + H(+) = a 5'-end (5'-triphosphoguanosine)-ribonucleoside in mRNA + diphosphate. It carries out the reaction a 5'-end (5'-triphosphoguanosine)-ribonucleoside in mRNA + S-adenosyl-L-methionine = a 5'-end (N(7)-methyl 5'-triphosphoguanosine)-ribonucleoside in mRNA + S-adenosyl-L-homocysteine. Its function is as follows. Outer capsid protein involved in mRNA capping. Catalyzes the last 3 enzymatic activities for formation of the 5' cap structure on the viral plus-strand transcripts, namely the RNA guanylyltransferase, RNA-7N- and RNA-2'O-methyltransferase activities. This Ctenopharyngodon idella (Grass carp) protein is Outer capsid protein VP1 (S1).